The primary structure comprises 1375 residues: Patatin-like phospholipase domain-containing protein 6 (1375 aa).

Residues 1–20 are disordered; it reads MEAPLQTGMMGTSSHGLATN. At 1 to 59 the chain is on the lumenal side; sequence MEAPLQTGMMGTSSHGLATNSSGAKVAERDGFQDVLAPGEGSAGRICGAQPVPFVPQVL. Over residues 9-20 the composition is skewed to polar residues; sequence MMGTSSHGLATN. Asparagine 20 is a glycosylation site (N-linked (GlcNAc...) asparagine). The helical transmembrane segment at 60–80 threads the bilayer; sequence GVMIGAGVAVVVTAVLILLVV. The Cytoplasmic segment spans residues 81–1375; the sequence is RRLRVPKTPA…QEPPGSATDA (1295 aa). 195–322 lines the a nucleoside 3',5'-cyclic phosphate pocket; it reads VLGHFEKPLF…VRVVQIIMVR (128 aa). Disordered regions lie at residues 352 to 436 and 449 to 472; these read FPSP…RSDF and LQEEASGGSLAAPARTPTQEPREQ. A Phosphoserine modification is found at serine 354. The segment covering 359 to 376 has biased composition (polar residues); the sequence is TRTSPVRGSKRMVSTSAT. Threonine 361 is subject to Phosphothreonine. Phosphoserine occurs at positions 362 and 372. Over residues 384–398 the composition is skewed to pro residues; the sequence is GRPPDPTGAPLPGPT. Residue serine 420 is modified to Phosphoserine. Threonine 464 carries the phosphothreonine modification. Residues 511–633 and 629–749 each bind a nucleoside 3',5'-cyclic phosphate; these read ELAK…VAAR and TVAA…LSQK. One can recognise a PNPLA domain in the interval 981 to 1147; the sequence is LVLGGGGARG…INNLPADIAR (167 aa). The GXGXXG motif lies at 985–990; it reads GGGARG. A GXSXG motif is present at residues 1012–1016; that stretch reads GTSIG. The active-site Nucleophile is the serine 1014. Aspartate 1134 (proton acceptor) is an active-site residue. The DGA/G motif lies at 1134-1136; it reads DGG. The disordered stretch occupies residues 1306 to 1375; that stretch reads SYVSDGCADG…QEPPGSATDA (70 aa). A compositionally biased stretch (acidic residues) spans 1313–1329; it reads ADGEESDCLTEYEEDAG.

It belongs to the NTE family. Glycosylated. In terms of tissue distribution, expressed in brain, placenta, kidney, neuron and skeletal muscle. Expressed in the developing eye, pituitary and brain.

The protein resides in the endoplasmic reticulum membrane. The catalysed reaction is a 1-acyl-sn-glycero-3-phosphocholine + H2O = sn-glycerol 3-phosphocholine + a fatty acid + H(+). The enzyme catalyses 1-(9Z-octadecenoyl)-sn-glycero-3-phosphocholine + H2O = sn-glycerol 3-phosphocholine + (9Z)-octadecenoate + H(+). It catalyses the reaction 1-hexadecanoylglycerol + H2O = glycerol + hexadecanoate + H(+). It carries out the reaction 2-hexadecanoylglycerol + H2O = glycerol + hexadecanoate + H(+). The catalysed reaction is 1-(9Z-octadecenoyl)-glycerol + H2O = glycerol + (9Z)-octadecenoate + H(+). The enzyme catalyses 2-(9Z-octadecenoyl)-glycerol + H2O = glycerol + (9Z)-octadecenoate + H(+). It catalyses the reaction 2-(5Z,8Z,11Z,14Z-eicosatetraenoyl)-glycerol + H2O = glycerol + (5Z,8Z,11Z,14Z)-eicosatetraenoate + H(+). It carries out the reaction 1-hexadecanoyl-sn-glycero-3-phosphate + H2O = sn-glycerol 3-phosphate + hexadecanoate + H(+). The catalysed reaction is 1-hexadecanoyl-sn-glycero-3-phosphocholine + H2O = sn-glycerol 3-phosphocholine + hexadecanoate + H(+). Inhibited by a series a OPs such as mipafox (MPX), phenyl saligenin phosphate (PSP), phenyl dipentyl phosphinate (PDPP), diisopropyl fluorophosphate and paraoxon. Functionally, phospholipase B that deacylates intracellular phosphatidylcholine (PtdCho), generating glycerophosphocholine (GroPtdCho). This deacylation occurs at both sn-2 and sn-1 positions of PtdCho. Catalyzes the hydrolysis of several naturally occurring membrane-associated lipids. Hydrolyzes lysophospholipids and monoacylglycerols, preferring the 1-acyl to the 2-acyl isomer. Does not catalyze hydrolysis of di- or triacylglycerols or fatty acid amides. The sequence is that of Patatin-like phospholipase domain-containing protein 6 from Homo sapiens (Human).